The following is a 644-amino-acid chain: Phosphomethylpyrimidine synthase (644 aa).

Substrate-binding positions include Asn236, Met265, Tyr294, His330, 350–352, 391–394, and Glu430; these read SRG and DGLR. Residue His434 participates in Zn(2+) binding. Tyr457 contacts substrate. His498 is a Zn(2+) binding site. [4Fe-4S] cluster-binding residues include Cys578, Cys581, and Cys586.

Belongs to the ThiC family. In terms of assembly, homodimer. It depends on [4Fe-4S] cluster as a cofactor.

It carries out the reaction 5-amino-1-(5-phospho-beta-D-ribosyl)imidazole + S-adenosyl-L-methionine = 4-amino-2-methyl-5-(phosphooxymethyl)pyrimidine + CO + 5'-deoxyadenosine + formate + L-methionine + 3 H(+). It functions in the pathway cofactor biosynthesis; thiamine diphosphate biosynthesis. Functionally, catalyzes the synthesis of the hydroxymethylpyrimidine phosphate (HMP-P) moiety of thiamine from aminoimidazole ribotide (AIR) in a radical S-adenosyl-L-methionine (SAM)-dependent reaction. This is Phosphomethylpyrimidine synthase from Aliivibrio fischeri (strain ATCC 700601 / ES114) (Vibrio fischeri).